Here is a 391-residue protein sequence, read N- to C-terminus: Na(+)/H(+) antiporter NhaA 2 (391 aa).

A run of 11 helical transmembrane segments spans residues 25–45 (AGGI…NSPL), 56–76 (VWLG…IFFL), 98–118 (ALPG…YIAI), 128–148 (GWAI…SLLG), 157–177 (VFLA…IAFF), 180–200 (SGLN…LVAL), 208–228 (LLPY…SGVH), 264–284 (VAFA…LSGI), 297–317 (VALG…VLAI), 335–355 (GVAI…NLAF), and 364–384 (EVKV…IVLL).

Belongs to the NhaA Na(+)/H(+) (TC 2.A.33) antiporter family.

The protein localises to the cell inner membrane. It catalyses the reaction Na(+)(in) + 2 H(+)(out) = Na(+)(out) + 2 H(+)(in). Na(+)/H(+) antiporter that extrudes sodium in exchange for external protons. The polypeptide is Na(+)/H(+) antiporter NhaA 2 (Pseudomonas syringae pv. tomato (strain ATCC BAA-871 / DC3000)).